The following is a 141-amino-acid chain: ATP synthase epsilon chain (141 aa).

Belongs to the ATPase epsilon chain family. F-type ATPases have 2 components, CF(1) - the catalytic core - and CF(0) - the membrane proton channel. CF(1) has five subunits: alpha(3), beta(3), gamma(1), delta(1), epsilon(1). CF(0) has three main subunits: a, b and c.

The protein resides in the cell inner membrane. Its function is as follows. Produces ATP from ADP in the presence of a proton gradient across the membrane. The polypeptide is ATP synthase epsilon chain (Paraburkholderia phymatum (strain DSM 17167 / CIP 108236 / LMG 21445 / STM815) (Burkholderia phymatum)).